The sequence spans 282 residues: Para-Rep C1 (282 aa).

The region spanning 1 to 99 is the CRESS-DNA virus Rep endonuclease domain; it reads MASKRWCFTL…ETLISEIGAP (99 aa). Residues 7-10 carry the RCR-1 motif; the sequence is CFTL. Glutamate 38 and histidine 47 together coordinate a divalent metal cation. The short motif at 47–49 is the RCR-2 element; the sequence is HLQ. Residues 56–77 carry the Nuclear localization signal motif; the sequence is KMIRLGGLKKKFGYRAHWEIAK. Tyrosine 86 (for DNA cleavage activity) is an active-site residue. The RCR-3 motif lies at 86-89; sequence YCTK. Serine 94 is an a divalent metal cation binding site. 174 to 182 is a binding site for ATP; sequence GSDGGEGKS.

This sequence belongs to the nanoviridea/circoviridae replication-associated protein family. As to quaternary structure, homooligomer (Potential). Rep binds to repeated DNA motifs (iterons). Mg(2+) serves as cofactor. It depends on Mn(2+) as a cofactor.

It localises to the host nucleus. The catalysed reaction is ATP + H2O = ADP + phosphate + H(+). Functionally, initiates and terminates the replication only of its own subviral DNA molecule. The closed circular ssDNA genome is first converted to a superhelical dsDNA. Rep binds a specific hairpin at the genome origin of replication. Introduces an endonucleolytic nick within the intergenic region of the genome, thereby initiating the rolling circle replication (RCR). Following cleavage, binds covalently to the 5'-phosphate of DNA as a tyrosyl ester. The cleavage gives rise to a free 3'-OH that serves as a primer for the cellular DNA polymerase. The polymerase synthesizes the (+) strand DNA by rolling circle mechanism. After one round of replication, a Rep-catalyzed nucleotidyl transfer reaction releases a circular single-stranded virus genome, thereby terminating the replication. Displays origin-specific DNA cleavage, nucleotidyl transferase, ATPase and helicase activities. The protein is Para-Rep C1 (C1) of Faba bean necrotic yellows C11 alphasatellite (FBNYC11A).